The chain runs to 267 residues: Apolipoprotein A-I (267 aa).

The signal sequence occupies residues 1-18 (MKAAVLTLAVLFLTGSQA). 2 tandem repeats follow at residues 68–89 (LKLL…EQLG) and 90–111 (PVTQ…QEMS). A 10 X approximate tandem repeats region spans residues 68–267 (LKLLDNWDSM…EEYTKKLNTQ (200 aa)). Position 110 is a methionine sulfoxide (methionine 110). The 3; half-length repeat unit spans residues 112-122 (KDLEEVKAKVQ). 5 tandem repeats follow at residues 123–144 (PYLD…QKVE), 145–166 (PLRA…EKLS), 167–188 (PLGE…THLA), 189–210 (PYTD…ENGG), and 211–232 (ARLA…EKAK). Methionine 136 bears the Methionine sulfoxide mark. A 9; half-length repeat occupies 233–243 (PALEDLRQGLL). The stretch at 244-267 (PVLESFKVSFLSALEEYTKKLNTQ) is repeat 10.

The protein belongs to the apolipoprotein A1/A4/E family. In terms of assembly, homodimer. Interacts with APOA1BP and CLU. Component of a sperm activating protein complex (SPAP), consisting of APOA1, an immunoglobulin heavy chain, an immunoglobulin light chain and albumin. Interacts with NDRG1. Interacts with SCGB3A2. Interacts with NAXE and YJEFN3. In terms of processing, glycosylated. Post-translationally, palmitoylated. Major protein of plasma HDL, also found in chylomicrons.

The protein localises to the secreted. Functionally, participates in the reverse transport of cholesterol from tissues to the liver for excretion by promoting cholesterol efflux from tissues and by acting as a cofactor for the lecithin cholesterol acyltransferase (LCAT). As part of the SPAP complex, activates spermatozoa motility. In Pongo abelii (Sumatran orangutan), this protein is Apolipoprotein A-I (APOA1).